The following is a 169-amino-acid chain: Podoplanin (169 aa).

An N-terminal signal peptide occupies residues 1–22 (MWRVPVLLLVLGGAGLRVPAAG). Residues 23–138 (ASTVRPDDII…EKDGLATVTL (116 aa)) are Extracellular-facing. O-linked (GalNAc...) threonine glycosylation is present at Thr-25. Positions 37 to 69 (DSVVTPGTEDSVVTPGAEDNVVTDGATEEPYES) are disordered. Residue Ser-38 is glycosylated (O-linked (GalNAc...) serine). Residues Thr-41 and Thr-44 are each glycosylated (O-linked (GalNAc...) threonine). Ser-47 carries an O-linked (GalNAc...) serine glycan. O-linked (GalNAc...) threonine glycosylation is found at Thr-50, Thr-59, Thr-63, Thr-72, Thr-76, Thr-79, Thr-83, Thr-92, Thr-96, Thr-106, Thr-107, Thr-108, Thr-113, Thr-126, and Thr-127. Residues 139-159 (VGIIVGVLLAIGFIGGIIIVV) traverse the membrane as a helical segment. Residues 140–144 (GIIVG) form a requires for dimerization and lipid rafts association region. The Cytoplasmic segment spans residues 160-169 (ARKMSGRYSP). Positions 161 to 162 (RK) are requires for interaction with MSN and EZR.

The protein belongs to the podoplanin family. In terms of assembly, homodimer. Interacts with CLEC1B; the interaction is independent of CLEC1B glycosylation and activates CLEC1B; the interaction is dependent of sialic acid on O-glycans. Interacts with CD9; this interaction is homophilic and attenuates platelet aggregation and pulmonary metastasis induced by PDPN. Interacts with LGALS8; the interaction is glycosylation-dependent; may participate in connection of the lymphatic endothelium to the surrounding extracellular matrix. Interacts with HSPA9. Interacts (via extracellular domain) with CD44; this interaction is required for PDPN-mediated directional migration and regulation of lamellipodia extension/stabilization during cell spreading and migration. Interacts (via cytoplasmic domain) with MSN and EZR; activates RHOA and promotes epithelial-mesenchymal transition. Interacts with CCL21; relocalized PDPN to the basolateral membrane. Extensively O-glycosylated. Contains sialic acid residues. O-glycosylation is necessary for platelet aggregation activity. Disialylated at Thr-59; sialic acid is critical for platelet-aggregating activity and for CLEC1B interaction. In terms of processing, the N-terminus is blocked.

The protein localises to the membrane. It is found in the cell projection. Its subcellular location is the filopodium membrane. The protein resides in the lamellipodium membrane. It localises to the microvillus membrane. The protein localises to the ruffle membrane. It is found in the membrane raft. Its subcellular location is the apical cell membrane. The protein resides in the basolateral cell membrane. It localises to the invadopodium. Mediates effects on cell migration and adhesion through its different partners. During development plays a role in blood and lymphatic vessels separation by binding CLEC1B, triggering CLEC1B activation in platelets and leading to platelet activation and/or aggregation. Interaction with CD9, on the contrary, attenuates platelet aggregation and pulmonary metastasis induced by PDPN. Mediates effects on cell migration and adhesion through its different partners. Through MSN or EZR interaction promotes epithelial-mesenchymal transition (EMT) leading to ERZ phosphorylation and triggering RHOA activation leading to cell migration increase and invasiveness. Interaction with CD44 promotes directional cell migration in epithelial and tumor cells. In lymph nodes (LNs), controls fibroblastic reticular cells (FRCs) adhesion to the extracellular matrix (ECM) and contraction of the actomyosin by maintaining ERM proteins (EZR; MSN and RDX) and MYL9 activation through association with unknown transmembrane proteins. Engagement of CLEC1B by PDPN promotes FRCs relaxation by blocking lateral membrane interactions leading to reduction of ERM proteins (EZR; MSN and RDX) and MYL9 activation. Through binding with LGALS8 may participate in connection of the lymphatic endothelium to the surrounding extracellular matrix. In keratinocytes, induces changes in cell morphology showing an elongated shape, numerous membrane protrusions, major reorganization of the actin cytoskeleton, increased motility and decreased cell adhesion. Controls invadopodia stability and maturation leading to efficient degradation of the extracellular matrix (ECM) in tumor cells through modulation of RHOC activity in order to activate ROCK1/ROCK2 and LIMK1/LIMK2 and inactivation of CFL1. Required for normal lung cell proliferation and alveolus formation at birth. Does not function as a water channel or as a regulator of aquaporin-type water channels. Does not have any effect on folic acid or amino acid transport. The chain is Podoplanin (PDPN) from Canis lupus familiaris (Dog).